We begin with the raw amino-acid sequence, 197 residues long: 3-isopropylmalate dehydratase small subunit (197 aa).

Belongs to the LeuD family. LeuD type 1 subfamily. As to quaternary structure, heterodimer of LeuC and LeuD.

The enzyme catalyses (2R,3S)-3-isopropylmalate = (2S)-2-isopropylmalate. Its pathway is amino-acid biosynthesis; L-leucine biosynthesis; L-leucine from 3-methyl-2-oxobutanoate: step 2/4. Functionally, catalyzes the isomerization between 2-isopropylmalate and 3-isopropylmalate, via the formation of 2-isopropylmaleate. The sequence is that of 3-isopropylmalate dehydratase small subunit from Geobacillus sp. (strain WCH70).